We begin with the raw amino-acid sequence, 267 residues long: Serine acetyltransferase (267 aa).

The protein belongs to the transferase hexapeptide repeat family.

The protein localises to the cytoplasm. It catalyses the reaction L-serine + acetyl-CoA = O-acetyl-L-serine + CoA. It functions in the pathway amino-acid biosynthesis; L-cysteine biosynthesis; L-cysteine from L-serine: step 1/2. This Haemophilus influenzae (strain ATCC 51907 / DSM 11121 / KW20 / Rd) protein is Serine acetyltransferase (cysE).